Reading from the N-terminus, the 332-residue chain is MNRSSNVPRKGILKSGTRSLQKVRRVHFANARNARSLLSMLKDISAQIIQRAWLSHTNKMIFRLLKHAICAAEFYVTHEILKKVAPLEAKLIKDPTMQCKIRFRFRGETFPPFIVFKIFLHTDGHGYKYFSGKNVLMPSSKAVDDACKLMGERKFHRIIMEDERIFPKSKVTDIMDVVTMQDYVQYRSFFDEAPAFSGGRNNSWRKLNLENIPRTMLMYDIVHYSESGVISNRLRNEMKFLLQRPVTQEIHKHQLRIVSEIRGPYLTVQPLYRPYKQQNQVKFLGRRSKQAQMKVEKMRKVYLAKEKNTSEVTEPKTGPSGTKDNYHLHSIF.

A disordered region spans residues 306 to 332 (EKNTSEVTEPKTGPSGTKDNYHLHSIF).

This is an uncharacterized protein from Homo sapiens (Human).